An 88-amino-acid polypeptide reads, in one-letter code: Large ribosomal subunit protein bL27 (88 aa).

The interval 1-24 (MATKKSGGSSGNGRDSRGRRLGVK) is disordered.

It belongs to the bacterial ribosomal protein bL27 family.

This Ehrlichia chaffeensis (strain ATCC CRL-10679 / Arkansas) protein is Large ribosomal subunit protein bL27.